We begin with the raw amino-acid sequence, 264 residues long: 3-methyl-2-oxobutanoate hydroxymethyltransferase (264 aa).

2 residues coordinate Mg(2+): Asp45 and Asp84. 3-methyl-2-oxobutanoate contacts are provided by residues 45–46 (DS), Asp84, and Lys112. Residue Glu114 participates in Mg(2+) binding. The Proton acceptor role is filled by Glu181.

This sequence belongs to the PanB family. In terms of assembly, homodecamer; pentamer of dimers. Requires Mg(2+) as cofactor.

It is found in the cytoplasm. The enzyme catalyses 3-methyl-2-oxobutanoate + (6R)-5,10-methylene-5,6,7,8-tetrahydrofolate + H2O = 2-dehydropantoate + (6S)-5,6,7,8-tetrahydrofolate. Its pathway is cofactor biosynthesis; (R)-pantothenate biosynthesis; (R)-pantoate from 3-methyl-2-oxobutanoate: step 1/2. Catalyzes the reversible reaction in which hydroxymethyl group from 5,10-methylenetetrahydrofolate is transferred onto alpha-ketoisovalerate to form ketopantoate. The protein is 3-methyl-2-oxobutanoate hydroxymethyltransferase of Tolumonas auensis (strain DSM 9187 / NBRC 110442 / TA 4).